Reading from the N-terminus, the 572-residue chain is Hexokinase (572 aa).

The region spanning 49 to 492 (DEPPISLETV…SGKGAALITA (444 aa)) is the Hexokinase domain. The hexokinase small subdomain stretch occupies residues 105–237 (NGTEEGRFIA…DIKVEVVALI (133 aa)). Residues 116–120 (DLGGT) and Ser-185 contribute to the D-glucose 6-phosphate site. Residue 116 to 121 (DLGGTN) coordinates ATP. Substrate is bound by residues 185-186 (SY), 202-203 (TK), and 238-239 (ND). The interval 238-481 (NDTVGTMVAA…LKFKLLQTAD (244 aa)) is hexokinase large subdomain. 2 residues coordinate D-glucose 6-phosphate: Asp-239 and Thr-263. Residue Thr-263 participates in ATP binding. Substrate contacts are provided by Asn-266, Glu-297, and Asp-331. Residues 336–337 (GK), 373–377 (TKYIS), and 448–452 (STYKY) contribute to the ATP site. D-glucose 6-phosphate-binding positions include 446-448 (DGS) and Ser-483.

It belongs to the hexokinase family.

The enzyme catalyses a D-hexose + ATP = a D-hexose 6-phosphate + ADP + H(+). It catalyses the reaction D-mannose + ATP = D-mannose 6-phosphate + ADP + H(+). The catalysed reaction is D-fructose + ATP = D-fructose 6-phosphate + ADP + H(+). It carries out the reaction D-glucose + ATP = D-glucose 6-phosphate + ADP + H(+). Its pathway is carbohydrate metabolism; hexose metabolism. The protein operates within carbohydrate degradation; glycolysis; D-glyceraldehyde 3-phosphate and glycerone phosphate from D-glucose: step 1/4. With respect to regulation, activated by glucose-6-phosphate. Inhibited by N-acetylglucosamine, glucosamine, mannoheptulose and ADP. Active against glucose, fructose, mannose, maltose and galactose. The protein is Hexokinase of Brugia malayi (Filarial nematode worm).